Here is a 142-residue protein sequence, read N- to C-terminus: Snaclec GPIB-binding protein subunit alpha (142 aa).

3 disulfide bridges follow: cysteine 6–cysteine 17, cysteine 39–cysteine 136, and cysteine 111–cysteine 128. The C-type lectin domain maps to 13-137; it reads HRQYCYKFFQ…CVEGNPFVCK (125 aa).

It belongs to the snaclec family. In terms of assembly, heterodimer of subunits alpha and beta; disulfide-linked. In terms of tissue distribution, expressed by the venom gland.

The protein localises to the secreted. Its function is as follows. Binds to platelet GPIb (subunit alpha) (GP1BA) and functions as a receptor blocker for vWF binding to GPIb. The platelet GPIb-binding site resides on the GPIB-BP subunit beta and not on the alpha subunit. At a final concentration of 104 nM totally abolishes vWF-dependent shear-induced platelet aggregation (SIPA) at a high shear stress, but had no effect on SIPA at a low shear stress. This Bothrops jararaca (Jararaca) protein is Snaclec GPIB-binding protein subunit alpha.